The sequence spans 508 residues: MSRFVQDLSKAMSQDGASQFQEVIRQELELSVKKELEKILTTAPSHEFEHTKKDLDGFRKLFHRFLQEKGPSVDWGKIQRPPEDSIQPYEKIKARGLPDNISSVLNKLVVVKLNGGLGTSMGCKGPKSLIGVRNENTFLDLTVQQIEHLNKTYNTDVPLVLMNSFNTDEDTKKILQKYNHCRVKIYTFNQSRYPRINKESLLPVAKDVSYSGENTEAWYPPGHGDIYASFYNSGLLDTFIGEGKEYIFVSNIDNLGATVDLYILNHLMNPPNGRPCEFVMEATNKARADVKGGTLTQYEGKLRLVEIAQVPKPHVDEFKSVSKFKIFNTNNLWISLAAVKRLQEQNAIDMEIIVNPKTLDGGLNVIQLETAVGAAIKSFENSLGINVPRSRFLPVKTTSDLLLVMSNLYSLNAGSLTMSEKREFPTVPLVKLGSSFTKVQDYLRRFESIPDMLELDHLTVSGDVTFGKNVSLKGTVIIIXNHGDRIDIPPGAVLENKIVSGNLRILDH.

Residue Ser13 is modified to Phosphoserine. UTP-binding positions include 113–116 (LNGG), Lys127, Gln190, and Gly222. 115-116 (GG) is a substrate binding site. Lys127 is a binding site for Mg(2+). Residues His223 and 251–253 (NID) contribute to the substrate site. Residues Asp253 and Lys396 each coordinate UTP. Asp253 contributes to the Mg(2+) binding site. Lys396 is an active-site residue. Thr426 carries the phosphothreonine modification. Ser434 is subject to Phosphoserine. Lys438 is modified (N6-acetyllysine). A phosphoserine mark is found at Ser448 and Ser461. Residues 457–508 (HLTVSGDVTFGKNVSLKGTVIIIXNHGDRIDIPPGAVLENKIVSGNLRILDH) are oligomerization. The interval 502–503 (NL) is critical for end-to-end subunit interaction.

It belongs to the UDPGP type 1 family. Homooctamer.

It localises to the cytoplasm. It carries out the reaction alpha-D-glucose 1-phosphate + UTP + H(+) = UDP-alpha-D-glucose + diphosphate. The protein operates within glycan biosynthesis; glycogen biosynthesis. In terms of biological role, UTP--glucose-1-phosphate uridylyltransferase catalyzing the conversion of glucose-1-phosphate into UDP-glucose, a crucial precursor for the production of glycogen. This is UTP--glucose-1-phosphate uridylyltransferase (UGP2) from Sus scrofa (Pig).